We begin with the raw amino-acid sequence, 573 residues long: MANPPHGGILKDLLARDAPRHAELEAEAETLPALLLTERHLCDLELILNGGFSPLEGFMNEKDYNGVVENVRLADGNLFSIPITLDASKETIDGLGLQPGSRVTLRDFRDDRNLAILTIDDIYQPDKQKEAKEVFGGDPEHPAVKYLYDQTNEYYIGGKVEAVNKLNHYDYVGLRFTPAELRLHFDKLGWTRVVAFQTRNPMHRAHRELTVRAARARQANVLIHPVVGLTKPGDIDHFTRVRVYEALLPRYPNGMAVLGLLPLAMRMGGPREAIWHAIIRKNHGATHFIVGRDHAGPGKNSKGEEFYGPYDAQHAVEKYRHELGIEVVEFQQLTYLPDTDEYKPRDEIPAGVKTLDISGTELRKRLRLGTHIPEWFSYPEVVKVLRESNPPRSKQGFTVFLTGYQNSGKAAIARALQVTLNQQGGRSVSLLLGDTVRHELSAELGFSREDRHKNIQRIAFVAAELTKAGAAVIAAPIAPYEESRQQARETISSAGTFFLVHVATSLEYAEKTDKRGVYARARRGEIKGFTGVDDPYETPQKPDITVDIEKQTVRSAVHEIILLLESQGFLEKA.

The N-terminal stretch occupies residues 1 to 169 (MANPPHGGIL…VEAVNKLNHY (169 aa)). The segment at 170–394 (DYVGLRFTPA…LRESNPPRSK (225 aa)) is catalytic. Sulfate is bound at residue Gln197. Residues 197–200 (QTRN) and 291–294 (GRDH) each bind ATP. Active-site residues include Thr198, Arg199, and Asn200. Residue Arg199 coordinates sulfate. Ala295 provides a ligand contact to sulfate. Leu333 serves as a coordination point for ATP. An allosteric regulation domain; adenylyl-sulfate kinase-like region spans residues 395–573 (QGFTVFLTGY…LESQGFLEKA (179 aa)). 3'-phosphoadenylyl sulfate-binding positions include 434 to 437 (DTVR), Arg451, 477 to 478 (IA), and Arg515.

This sequence in the N-terminal section; belongs to the sulfate adenylyltransferase family. In the C-terminal section; belongs to the APS kinase family. As to quaternary structure, homohexamer. Dimer of trimers.

Its subcellular location is the cytoplasm. The catalysed reaction is sulfate + ATP + H(+) = adenosine 5'-phosphosulfate + diphosphate. The protein operates within sulfur metabolism; hydrogen sulfide biosynthesis; sulfite from sulfate: step 1/3. Allosterically inhibited by 3'-phosphoadenosine 5'-phosphosulfate (PAPS). In terms of biological role, catalyzes the first intracellular reaction of sulfate assimilation, forming adenosine-5'-phosphosulfate (APS) from inorganic sulfate and ATP. Plays an important role in sulfate activation as a component of the biosynthesis pathway of sulfur-containing amino acids. The protein is Sulfate adenylyltransferase of Coccidioides immitis (strain RS) (Valley fever fungus).